The sequence spans 297 residues: MENSTPKKISESQIKNLALSGGGFYGFAVVGALKEIFDNYIDPNNIKTISGVSVGSIIATMLAIGYSIDEITKIMFEIDMDTLIKDSYFSYYTLWEKFGMYNADKLEQEIERIIRDKTHIKNCTFSQIEKNLIIVTTNLNYQRTRIFSKLETPTMIISKAVRMSISYPFIMVPVLFEGDLYGDGGETLNYPITLFDDDLDKTIGITFANHNENDDGTLKTRLPINNFYDYIVSLGLTMNRSSYISQISSKYLDRSIVIKINEDISSMQFNLDLKQKEYLFECGIKSVKQQIIKLINH.

The next 2 membrane-spanning stretches (helical) occupy residues Leu-17 to Phe-37 and Thr-48 to Ile-68. The PNPLA domain occupies Leu-17–Asp-196. The GXGXXG motif lies at Gly-21–Gly-26. The GXSXG motif lies at Gly-51–Gly-55. Ser-53 (nucleophile) is an active-site residue. The N-linked (GlcNAc...) asparagine; by host glycan is linked to Asn-122. Catalysis depends on Asp-183, which acts as the Proton acceptor. A DGA/G motif is present at residues Asp-183–Gly-185. N-linked (GlcNAc...) asparagine; by host glycosylation occurs at Asn-239.

Its subcellular location is the membrane. Functionally, probable lipid hydrolase. This is an uncharacterized protein from Acanthamoeba polyphaga mimivirus (APMV).